We begin with the raw amino-acid sequence, 193 residues long: Putative 3-methyladenine DNA glycosylase (193 aa).

The protein belongs to the DNA glycosylase MPG family.

The sequence is that of Putative 3-methyladenine DNA glycosylase from Nitrosospira multiformis (strain ATCC 25196 / NCIMB 11849 / C 71).